Reading from the N-terminus, the 215-residue chain is 3-demethoxyubiquinol 3-hydroxylase (215 aa).

The Fe cation site is built by Glu64, Glu94, His97, Glu146, Glu178, and His181.

Belongs to the COQ7 family. Requires Fe cation as cofactor.

It is found in the cell membrane. It carries out the reaction a 5-methoxy-2-methyl-3-(all-trans-polyprenyl)benzene-1,4-diol + AH2 + O2 = a 3-demethylubiquinol + A + H2O. It participates in cofactor biosynthesis; ubiquinone biosynthesis. Catalyzes the hydroxylation of 2-nonaprenyl-3-methyl-6-methoxy-1,4-benzoquinol during ubiquinone biosynthesis. The protein is 3-demethoxyubiquinol 3-hydroxylase of Pseudomonas fluorescens (strain ATCC BAA-477 / NRRL B-23932 / Pf-5).